The chain runs to 164 residues: MSQSICSTGLRWLWLVVVVLIIDLGSKYLILQNFALGDTVPLFPSLNLHYARNYGAAFSFLADSGGWQRWFFAGIAIGISVILAVMMYRSKATQKLNNIAYALIIGGALGNLFDRLWHGFVVDMIDFYVGDWHFATFNLADTAICVGAALIVLEGFLPSKAKKQ.

3 consecutive transmembrane segments (helical) span residues 12 to 32 (WLWL…LILQ), 70 to 90 (WFFA…MYRS), and 102 to 122 (ALII…GFVV). Catalysis depends on residues aspartate 123 and aspartate 141. Residues 137-157 (FNLADTAICVGAALIVLEGFL) traverse the membrane as a helical segment.

This sequence belongs to the peptidase A8 family.

Its subcellular location is the cell inner membrane. The catalysed reaction is Release of signal peptides from bacterial membrane prolipoproteins. Hydrolyzes -Xaa-Yaa-Zaa-|-(S,diacylglyceryl)Cys-, in which Xaa is hydrophobic (preferably Leu), and Yaa (Ala or Ser) and Zaa (Gly or Ala) have small, neutral side chains.. It functions in the pathway protein modification; lipoprotein biosynthesis (signal peptide cleavage). Its function is as follows. This protein specifically catalyzes the removal of signal peptides from prolipoproteins. The polypeptide is Lipoprotein signal peptidase (Escherichia coli O9:H4 (strain HS)).